A 341-amino-acid polypeptide reads, in one-letter code: Spindolin (341 aa).

The N-terminal stretch at 1 to 20 (MNKLILISLIASLYQVEVDA) is a signal peptide.

As to quaternary structure, homodimer; disulfide-linked.

This protein is a spindle body protein. The sequence is that of Spindolin (SPH) from Choristoneura biennis entomopoxvirus (CbEPV).